The chain runs to 87 residues: Type 3 secretion system needle filament protein (87 aa).

This sequence belongs to the SctF family. The core secretion machinery of the T3SS is composed of approximately 20 different proteins, including cytoplasmic components, a base, an export apparatus and a needle. This subunit polymerizes and forms the helical needle filament. In Y.enterocolitica E40, the needles are composed of 139 (plus-minus 19) YscF/SctF subunits.

It localises to the secreted. The protein localises to the cell surface. The secretion and/or polymerization may be controlled by the type III secretion system regulator YopR. Functionally, component of the type III secretion system (T3SS), also called injectisome, which is used to inject bacterial effector proteins into eukaryotic host cells. YscF/SctF forms the external needle filament that protrudes from the bacterial surface. The needle is not sufficient by itself for the formation of a pore allowing translocation of the Yop effectors across the host cell membrane. The chain is Type 3 secretion system needle filament protein from Yersinia enterocolitica.